The following is an 82-amino-acid chain: UPF0248 protein Mevan_1298 (82 aa).

It belongs to the UPF0248 family.

In Methanococcus vannielii (strain ATCC 35089 / DSM 1224 / JCM 13029 / OCM 148 / SB), this protein is UPF0248 protein Mevan_1298.